A 185-amino-acid chain; its full sequence is Neuronal vesicle trafficking-associated protein 1 (185 aa).

Residues 1–82 lie on the Cytoplasmic side of the membrane; sequence MVKLGNNFSE…ITEGVSERFK (82 aa). A helical; Signal-anchor for type II membrane protein transmembrane segment spans residues 83–103; that stretch reads VTVLVLFALAFLTCVVFLVVY. Residues 104-185 lie on the Lumenal side of the membrane; sequence KVYKYDHTCP…QETEAAEKSA (82 aa).

Belongs to the NSG family.

The protein resides in the membrane. The protein localises to the golgi apparatus. Its subcellular location is the trans-Golgi network membrane. It localises to the endosome membrane. It is found in the cell projection. The protein resides in the dendrite. The protein localises to the early endosome membrane. Its subcellular location is the late endosome membrane. It localises to the lysosome lumen. It is found in the recycling endosome membrane. The protein resides in the cytoplasmic vesicle membrane. The protein localises to the golgi stack membrane. Its subcellular location is the endosome. It localises to the multivesicular body membrane. Plays a role in the recycling mechanism in neurons of multiple receptors and acts at the level of early endosomes to promote sorting of receptors toward a recycling pathway. This Gallus gallus (Chicken) protein is Neuronal vesicle trafficking-associated protein 1.